Here is a 344-residue protein sequence, read N- to C-terminus: Cyclin-dependent kinase 20 (344 aa).

One can recognise a Protein kinase domain in the interval 4–288 (YSILGRIGEG…ARQALLHPYF (285 aa)). ATP-binding positions include 10–18 (IGEGAHGIV) and Lys-33. Asp-127 functions as the Proton acceptor in the catalytic mechanism.

Belongs to the protein kinase superfamily. CMGC Ser/Thr protein kinase family. CDC2/CDKX subfamily. As to quaternary structure, monomer. Interacts with tbc1d32.

It is found in the nucleus. It localises to the cytoplasm. The protein localises to the cell projection. The protein resides in the cilium. The catalysed reaction is L-seryl-[protein] + ATP = O-phospho-L-seryl-[protein] + ADP + H(+). It carries out the reaction L-threonyl-[protein] + ATP = O-phospho-L-threonyl-[protein] + ADP + H(+). Functionally, involved in cell growth. Activates cdk2, a kinase involved in the control of the cell cycle, by phosphorylating residue 'Thr-160'. Required for high-level Shh responses in the developing neural tube. Together with tbc1d32, controls the structure of the primary cilium by coordinating assembly of the ciliary membrane and axoneme, allowing gli2 to be properly activated in response to SHH signaling. This Danio rerio (Zebrafish) protein is Cyclin-dependent kinase 20 (cdk20).